The following is a 31-amino-acid chain: Cytochrome b6-f complex subunit 8 (31 aa).

Residues 5–25 (IVSLAWAALMVVFTFSLSLVV) form a helical membrane-spanning segment.

The protein belongs to the PetN family. In terms of assembly, the 4 large subunits of the cytochrome b6-f complex are cytochrome b6, subunit IV (17 kDa polypeptide, PetD), cytochrome f and the Rieske protein, while the 4 small subunits are PetG, PetL, PetM and PetN. The complex functions as a dimer.

It is found in the plastid. The protein resides in the chloroplast thylakoid membrane. Its function is as follows. Component of the cytochrome b6-f complex, which mediates electron transfer between photosystem II (PSII) and photosystem I (PSI), cyclic electron flow around PSI, and state transitions. This Cicer arietinum (Chickpea) protein is Cytochrome b6-f complex subunit 8.